Reading from the N-terminus, the 274-residue chain is Large ribosomal subunit protein uL2 (274 aa).

The interval A224 to K254 is disordered. The segment covering D229 to T239 has biased composition (basic and acidic residues).

Belongs to the universal ribosomal protein uL2 family. Part of the 50S ribosomal subunit. Forms a bridge to the 30S subunit in the 70S ribosome.

Its function is as follows. One of the primary rRNA binding proteins. Required for association of the 30S and 50S subunits to form the 70S ribosome, for tRNA binding and peptide bond formation. It has been suggested to have peptidyltransferase activity; this is somewhat controversial. Makes several contacts with the 16S rRNA in the 70S ribosome. The polypeptide is Large ribosomal subunit protein uL2 (Leptothrix cholodnii (strain ATCC 51168 / LMG 8142 / SP-6) (Leptothrix discophora (strain SP-6))).